The sequence spans 631 residues: MSHQEGSTDGLPDLGTESLFSSPEEQSGAVAATEASSDIDIATSELSVTVTGDGSDSRDGGFPNDASTENRSSDQESASEDIELESLEDFEHFLMSGESLFHYPLVGEEETEREEEDEEIQEEGGEEEEEEEEEEEEEEEEEEEEEEQPRAGPQGSGGNHEQYSLEEDQALEEWVSSETSALPRPRWQVVTALHQRQLGSRPRFVYEACGARAFVQRFRLQYRLADHVGCVNTVHFNQRGTRLASSGDDLKVIVWDWVRQRPVLNFESGHTNNVFQAKFLPNCGDSTLAMCARDGQVRVAELINASYFNNTKCVAQHRGPAHKLALEPDSPYKFLTSGEDAVVFTIDLRQDRPASKVVVTRENDKKVGLYTITVNPANTYQFAVGGQDQFVRIYDQRKIDKKENNGVLKKFTPHHLVNCDFPTNITCVVYSHDGTELLASYNDDDIYLFNSSHSDGAQYSKRFKGHRNNTTVKGVNFYGPRSEFVVSGSDCGHIFFWEKSSCQIIQFLKGSREGTINCLEPHPYLPVLACSGLDHDVKIWTPTAKAATELTGLKKVIKKNKWERDEDSLHHGSLFDQYMLWFLLRHVTQRGRHQDWRSGEAEFPDEESDESSSTSETSEEEVQDRVQCMPS.

Disordered regions lie at residues 1 to 91 (MSHQ…EDFE) and 108 to 163 (EEET…HEQY). Over residues 44–54 (SELSVTVTGDG) the composition is skewed to polar residues. Composition is skewed to acidic residues over residues 77–88 (SASEDIELESLE) and 108–147 (EEET…EEEE). WD repeat units follow at residues 226 to 265 (DHVG…PVLN), 269 to 310 (GHTN…YFNN), 316 to 356 (QHRG…PASK), 364 to 404 (DKKV…KKEN), 420 to 459 (DFPT…GAQY), 467 to 507 (RNNT…IIQF), and 511 to 550 (SREG…ATEL). The interval 594-631 (QDWRSGEAEFPDEESDESSSTSETSEEEVQDRVQCMPS) is disordered.

Belongs to the WD repeat DCAF8 family.

The sequence is that of DDB1- and CUL4-associated factor 8-like protein 2 (DCAF8L2) from Homo sapiens (Human).